The primary structure comprises 249 residues: Transmembrane protein 150C (249 aa).

Topologically, residues 1-9 are cytoplasmic; it reads MDGKKCSVW. The helical transmembrane segment at 10–30 threads the bilayer; the sequence is MFLPLVFTLFTSAGLWIVYFI. Topologically, residues 31–64 are extracellular; that stretch reads AVEDDKILPLNSAERKPGVKHAPYISIAGDDPPA. Residues 65–85 traverse the membrane as a helical segment; that stretch reads SCVFSQVMNMAAFLALVVAVL. Topologically, residues 86–97 are cytoplasmic; sequence RFIQLKPKVLNP. A helical transmembrane segment spans residues 98–118; that stretch reads WLNISGLVALCLASFGMTLLG. Over 119–130 the chain is Extracellular; the sequence is NFQLTNDEEIHN. Residues 131–151 form a helical membrane-spanning segment; the sequence is VGTSLTFGFGTLTCWIQAALT. At 152-168 the chain is on the cytoplasmic side; that stretch reads LKVNIKNEGRRVGIPRV. Residues 169–189 form a helical membrane-spanning segment; sequence ILSASITLCVVLYFILMAQSI. Over 190 to 192 the chain is Extracellular; the sequence is HMY. A helical transmembrane segment spans residues 193–213; that stretch reads AARVQWGLVMCFLSYFGTFAV. Over 214–249 the chain is Cytoplasmic; it reads EFRHYRYEIVCSEYQENFLSFSESLSEASEYQTDQV.

Belongs to the DRAM/TMEM150 family.

The protein resides in the cell membrane. Its subcellular location is the lysosome membrane. It carries out the reaction Ca(2+)(in) = Ca(2+)(out). The catalysed reaction is Na(+)(in) = Na(+)(out). It catalyses the reaction K(+)(in) = K(+)(out). The enzyme catalyses Mg(2+)(in) = Mg(2+)(out). Nonselective cationic channel with high permeability to Ca(2+). Component of a mechanosensitive cation channel, confers mechanically activated (MA) currents with slow inactivation kinetics. May contribute to proprioception. The sequence is that of Transmembrane protein 150C from Homo sapiens (Human).